The chain runs to 440 residues: GTPase Obg (440 aa).

The region spanning 5–163 is the Obg domain; that stretch reads STFVDQTKIE…RTLRLELKVL (159 aa). Residues 164 to 338 enclose the OBG-type G domain; it reads ADVGLVGFPS…LMSRAADLVS (175 aa). GTP-binding positions include 170 to 177, 195 to 199, 217 to 220, 288 to 291, and 319 to 321; these read GFPSVGKS, FTTLK, DLPG, SQMD, and SSV. The Mg(2+) site is built by serine 177 and threonine 197. Positions 362–440 constitute an OCT domain; sequence YHRPEKMEFT…IGDFSFEFVQ (79 aa).

This sequence belongs to the TRAFAC class OBG-HflX-like GTPase superfamily. OBG GTPase family. Monomer. Mg(2+) serves as cofactor.

Its subcellular location is the cytoplasm. In terms of biological role, an essential GTPase which binds GTP, GDP and possibly (p)ppGpp with moderate affinity, with high nucleotide exchange rates and a fairly low GTP hydrolysis rate. Plays a role in control of the cell cycle, stress response, ribosome biogenesis and in those bacteria that undergo differentiation, in morphogenesis control. The chain is GTPase Obg from Lactobacillus delbrueckii subsp. bulgaricus (strain ATCC BAA-365 / Lb-18).